The chain runs to 342 residues: MSVENVERLSPEQADAFFGQSSVDLISRALGGQVLGCSDDFFASCENLINPADPIRKAGVFVETGAWYDGWETRRHNTAPCDWVIVKLGPSSGRVTGCEIDTTFFNGNHAPEVSVEAAFLPEGNPDAKTNWTPILPKLPCGPTQRHIYRFKEIPQQNFTHVRLCMYPDGGIARFRLYGNVVPVFPADLDARLDLAHMYLGGLVVQCSDQHFGKKDNLLLPGRGVNMGDGWETARSREKGHVDWVIVKLGARGYIDDALIDTNHFKGNYPKEVILEAIDSPDHIPGPDAQWVTILPARKLGPHMEHVFTNLQNNSTPMTHVRMIIIPDGGVKRLRIYGRRAAN.

This sequence belongs to the allantoicase family.

It catalyses the reaction allantoate + H2O = (S)-ureidoglycolate + urea. The protein operates within nitrogen metabolism; (S)-allantoin degradation; (S)-ureidoglycolate from allantoate (aminidohydrolase route): step 1/1. Functionally, utilization of purines as secondary nitrogen sources, when primary sources are limiting. This chain is Probable allantoicase, found in Schizosaccharomyces pombe (strain 972 / ATCC 24843) (Fission yeast).